Here is a 202-residue protein sequence, read N- to C-terminus: GTP cyclohydrolase 1 (202 aa).

Residues C90, H93, and C163 each coordinate Zn(2+).

The protein belongs to the GTP cyclohydrolase I family. As to quaternary structure, homomer.

The enzyme catalyses GTP + H2O = 7,8-dihydroneopterin 3'-triphosphate + formate + H(+). Its pathway is cofactor biosynthesis; 7,8-dihydroneopterin triphosphate biosynthesis; 7,8-dihydroneopterin triphosphate from GTP: step 1/1. In Mycobacterium marinum (strain ATCC BAA-535 / M), this protein is GTP cyclohydrolase 1.